The sequence spans 549 residues: Glucose-6-phosphate isomerase (549 aa).

N6-acetyllysine occurs at positions 80, 228, and 234. The active-site Proton donor is glutamate 355. Active-site residues include histidine 386 and lysine 514.

Belongs to the GPI family.

The protein resides in the cytoplasm. It catalyses the reaction alpha-D-glucose 6-phosphate = beta-D-fructose 6-phosphate. It functions in the pathway carbohydrate biosynthesis; gluconeogenesis. Its pathway is carbohydrate degradation; glycolysis; D-glyceraldehyde 3-phosphate and glycerone phosphate from D-glucose: step 2/4. In terms of biological role, catalyzes the reversible isomerization of glucose-6-phosphate to fructose-6-phosphate. This Escherichia coli O17:K52:H18 (strain UMN026 / ExPEC) protein is Glucose-6-phosphate isomerase.